We begin with the raw amino-acid sequence, 383 residues long: Acetylornithine deacetylase (383 aa).

Position 80 (histidine 80) interacts with Zn(2+). Aspartate 82 is a catalytic residue. Residue aspartate 112 coordinates Zn(2+). Glutamate 144 is an active-site residue. Positions 145, 169, and 355 each coordinate Zn(2+).

The protein belongs to the peptidase M20A family. ArgE subfamily. As to quaternary structure, homodimer. Zn(2+) is required as a cofactor. The cofactor is Co(2+). It depends on glutathione as a cofactor.

The protein localises to the cytoplasm. The enzyme catalyses N(2)-acetyl-L-ornithine + H2O = L-ornithine + acetate. The protein operates within amino-acid biosynthesis; L-arginine biosynthesis; L-ornithine from N(2)-acetyl-L-ornithine (linear): step 1/1. In terms of biological role, catalyzes the hydrolysis of the amide bond of N(2)-acetylated L-amino acids. Cleaves the acetyl group from N-acetyl-L-ornithine to form L-ornithine, an intermediate in L-arginine biosynthesis pathway, and a branchpoint in the synthesis of polyamines. This is Acetylornithine deacetylase from Escherichia coli O17:K52:H18 (strain UMN026 / ExPEC).